We begin with the raw amino-acid sequence, 30 residues long: Elongation factor 1-delta (30 aa).

The protein belongs to the EF-1-beta/EF-1-delta family. EF-1 is composed of 4 subunits: alpha, beta (1B-alpha=beta'), delta (1B-beta), and gamma (1B-gamma).

EF-1-beta and EF-1-delta stimulate the exchange of GDP bound to EF-1-alpha to GTP. The chain is Elongation factor 1-delta from Populus euphratica (Euphrates poplar).